Here is a 253-residue protein sequence, read N- to C-terminus: Homeotic protein ultrabithorax (253 aa).

Positions 125–141 (GNTSNGSNAPNAANGQN) are enriched in low complexity. The segment at 125-193 (GNTSNGSNAP…GNGTAGGVPQ (69 aa)) is disordered. Residues 176–189 (RGGGSAGGGNGTAG) are compositionally biased toward gly residues. Residues 237–242 (FYPWMA) carry the Antp-type hexapeptide motif.

Belongs to the Antp homeobox family.

The protein resides in the nucleus. In terms of biological role, sequence-specific transcription factor which is part of a developmental regulatory system that provides cells with specific positional identities on the anterior-posterior axis. Binds the consensus region 5'-TTAAT[GT][GA]-3'. This homeotic protein controls development of the cells in the posterior thoracic and first abdominal segments. It activates the synthesis of the decapentaplegic (DPP) growth factor. The polypeptide is Homeotic protein ultrabithorax (Ubx) (Drosophila funebris (Fruit fly)).